A 704-amino-acid chain; its full sequence is Polyribonucleotide nucleotidyltransferase (704 aa).

Residues Asp-487 and Asp-493 each coordinate Mg(2+). The KH domain occupies 554 to 613 (PRLLTIKIHPDKIREVIGKGGSTIQAITKETGTQIDIQDDGTIIIASVNAIAAQAAKSRI). The region spanning 623–691 (GRIYEGKVAK…KQGRIRLSIK (69 aa)) is the S1 motif domain.

It belongs to the polyribonucleotide nucleotidyltransferase family. In terms of assembly, component of the RNA degradosome, which is a multiprotein complex involved in RNA processing and mRNA degradation. The cofactor is Mg(2+).

It localises to the cytoplasm. The catalysed reaction is RNA(n+1) + phosphate = RNA(n) + a ribonucleoside 5'-diphosphate. In terms of biological role, involved in mRNA degradation. Catalyzes the phosphorolysis of single-stranded polyribonucleotides processively in the 3'- to 5'-direction. This is Polyribonucleotide nucleotidyltransferase from Xanthomonas euvesicatoria pv. vesicatoria (strain 85-10) (Xanthomonas campestris pv. vesicatoria).